The chain runs to 377 residues: Stimulator of interferon genes protein (377 aa).

Residues 1-21 (MRRAEENNGFGTIPKRRNQHT) are Cytoplasmic-facing. A helical transmembrane segment spans residues 22–42 (PFYASIGMIVVIIVAFTSYHI). The Extracellular portion of the chain corresponds to 43-57 (TSYGDDRNRAMRQYS). Residues 58-80 (FTFSLAYLAFLVGELLRRCCLFA) traverse the membrane as a helical segment. Residues 81 to 101 (EEYRHIETRYNGSLKKAIQTT) are Cytoplasmic-facing. A helical membrane pass occupies residues 102-122 (FSFGHNNVLFVASLLFFVVFV). At 123–154 (ASNDPNGSSSVIQGNSTAEPHTEMRQTSGWQG) the chain is on the extracellular side. The helical transmembrane segment at 155–175 (LWGQFIISALLTPLVVHLLGL) threads the bilayer. Over 176–377 (RELSKVEESQ…LKDSELEIGG (202 aa)) the chain is Cytoplasmic. 2',3'-cGAMP-binding positions include Tyr206, Arg272, 278–279 (RH), and Thr303. 3',3'-c-di-GMP-binding positions include Tyr206, Arg272, Arg278, and 300 to 303 (EYAT).

It belongs to the TMEM173 family. In terms of assembly, homodimer.

The protein resides in the endoplasmic reticulum membrane. Its function is as follows. Sensor of cytosolic DNA from bacteria and viruses that promotes autophagy. Acts by recognizing and binding cyclic GMP-AMP (cGAMP), a messenger produced by CGAS in response to DNA in the cytosol. Following cGAMP-binding, promotes the formation of autophagosomes, leading to target cytosolic DNA for degradation by the lysosome. Exhibits guanine base-specific ligand recognition. Binds 3'-3'linked cGAMP, 2'-3' linked cGAMP and 3'-3' linked c-di-GMP with much greater affinity as compared to 3'-3' linked c-di-AMP. Lacks the C-terminal tail (CTT) found in mammalian orthologs which is essential for interferon signaling. This Nematostella vectensis (Starlet sea anemone) protein is Stimulator of interferon genes protein.